Consider the following 409-residue polypeptide: Outer membrane protein YopM (409 aa).

15 LRR repeats span residues 72–91 (QAHE…ELPP), 92–113 (HLES…PQSL), 114–131 (KSLL…DLPP), 132–153 (LLEY…QNSS), 154–173 (FLKI…DLPP), 174–195 (SLEF…QNLP), 196–215 (FLTA…DLPL), 216–237 (SLES…QNLP), 238–257 (FLTT…DLPP), 258–279 (SLEA…PQSL), 280–297 (TFLD…ELPP), 298–317 (NLYY…DLPP), 318–339 (SLEE…PPRL), 340–357 (ERLI…ELPQ), and 358–379 (NLKQ…PESV). Positions 246 and 266 each coordinate Ca(2+). Ca(2+)-binding residues include asparagine 307, glutamate 308, and asparagine 326.

It belongs to the LRR-containing bacterial E3 ligase family. In terms of assembly, homotetramer forming a hollow cylinder with an inner diameter of approximately 35 angstroms.

The protein resides in the cell outer membrane. The protein localises to the secreted. In terms of biological role, effector proteins function to alter host cell physiology and promote bacterial survival in host tissues. In Yersinia pestis, this protein is Outer membrane protein YopM (yopM).